The chain runs to 284 residues: Deoxyribonuclease-1 (284 aa).

Positions 1 to 22 (MRGARLMGALLALAGLLQGALA) are cleaved as a signal peptide. N40 carries an N-linked (GlcNAc...) asparagine glycan. Residue E100 is part of the active site. Residues C123 and C126 are joined by a disulfide bond. The N-linked (GlcNAc...) asparagine glycan is linked to N128. H156 is an active-site residue. Cysteines 195 and 231 form a disulfide.

This sequence belongs to the DNase I family. Ca(2+) is required as a cofactor. Requires Mg(2+) as cofactor. In terms of tissue distribution, highest expression in pancreas.

The protein resides in the secreted. It localises to the zymogen granule. It is found in the nucleus envelope. It catalyses the reaction Endonucleolytic cleavage to 5'-phosphodinucleotide and 5'-phosphooligonucleotide end-products.. Functionally, serum endocuclease secreted into body fluids by a wide variety of exocrine and endocrine organs. Expressed by non-hematopoietic tissues and preferentially cleaves protein-free DNA. Among other functions, seems to be involved in cell death by apoptosis. Binds specifically to G-actin and blocks actin polymerization. Together with DNASE1L3, plays a key role in degrading neutrophil extracellular traps (NETs). NETs are mainly composed of DNA fibers and are released by neutrophils to bind pathogens during inflammation. Degradation of intravascular NETs by DNASE1 and DNASE1L3 is required to prevent formation of clots that obstruct blood vessels and cause organ damage following inflammation. This Canis lupus familiaris (Dog) protein is Deoxyribonuclease-1 (DNASE1).